A 144-amino-acid chain; its full sequence is Granulocyte-macrophage colony-stimulating factor (144 aa).

Residues 1-17 (MWLQNLLFLGIVVYSFS) form the signal peptide. Serine 22 carries O-linked (GalNAc...) serine glycosylation. Residue threonine 27 is glycosylated (O-linked (GalNAc...) threonine). Cystine bridges form between cysteine 71–cysteine 113 and cysteine 105–cysteine 138. Asparagine 86 carries N-linked (GlcNAc...) asparagine glycosylation.

Belongs to the GM-CSF family. As to quaternary structure, monomer. The signaling GM-CSF receptor complex is a dodecamer of two head-to-head hexamers of two alpha, two beta, and two ligand subunits.

Its subcellular location is the secreted. Its function is as follows. Cytokine that stimulates the growth and differentiation of hematopoietic precursor cells from various lineages, including granulocytes, macrophages, eosinophils and erythrocytes. The polypeptide is Granulocyte-macrophage colony-stimulating factor (Csf2) (Rattus norvegicus (Rat)).